A 264-amino-acid chain; its full sequence is S-adenosylmethionine decarboxylase proenzyme (264 aa).

Catalysis depends on serine 113, which acts as the Schiff-base intermediate with substrate; via pyruvic acid. Residue serine 113 is modified to Pyruvic acid (Ser); by autocatalysis. The active-site Proton acceptor; for processing activity is the histidine 118. The active-site Proton donor; for catalytic activity is the cysteine 141.

The protein belongs to the prokaryotic AdoMetDC family. Type 2 subfamily. Heterooctamer of four alpha and four beta chains arranged as a tetramer of alpha/beta heterodimers. The cofactor is pyruvate. In terms of processing, is synthesized initially as an inactive proenzyme. Formation of the active enzyme involves a self-maturation process in which the active site pyruvoyl group is generated from an internal serine residue via an autocatalytic post-translational modification. Two non-identical subunits are generated from the proenzyme in this reaction, and the pyruvate is formed at the N-terminus of the alpha chain, which is derived from the carboxyl end of the proenzyme. The post-translation cleavage follows an unusual pathway, termed non-hydrolytic serinolysis, in which the side chain hydroxyl group of the serine supplies its oxygen atom to form the C-terminus of the beta chain, while the remainder of the serine residue undergoes an oxidative deamination to produce ammonia and the pyruvoyl group blocking the N-terminus of the alpha chain.

It catalyses the reaction S-adenosyl-L-methionine + H(+) = S-adenosyl 3-(methylsulfanyl)propylamine + CO2. It participates in amine and polyamine biosynthesis; S-adenosylmethioninamine biosynthesis; S-adenosylmethioninamine from S-adenosyl-L-methionine: step 1/1. In terms of biological role, catalyzes the decarboxylation of S-adenosylmethionine to S-adenosylmethioninamine (dcAdoMet), the propylamine donor required for the synthesis of the polyamines spermine and spermidine from the diamine putrescine. This is S-adenosylmethionine decarboxylase proenzyme from Xanthomonas campestris pv. campestris (strain B100).